Consider the following 117-residue polypeptide: ATP-dependent Clp protease adapter protein ClpS 1 (117 aa).

The tract at residues 1-33 (MIAMPVRMQQGSEGDGGGPSRGTSVITRTKPKT) is disordered.

It belongs to the ClpS family. Binds to the N-terminal domain of the chaperone ClpA.

Functionally, involved in the modulation of the specificity of the ClpAP-mediated ATP-dependent protein degradation. The chain is ATP-dependent Clp protease adapter protein ClpS 1 from Rhizobium meliloti (strain 1021) (Ensifer meliloti).